Reading from the N-terminus, the 1063-residue chain is Cellulose synthase A catalytic subunit 7 [UDP-forming] (1063 aa).

Residues 1-213 (MDTASVTGGE…IPSSKINPYR (213 aa)) are Cytoplasmic-facing. Zn(2+)-binding residues include Cys18, Cys21, Cys37, Cys40, Cys45, Cys48, Cys60, and Cys63. An RING-type; degenerate zinc finger spans residues 18–64 (CRVCGEEVAAREDGKPFVACAECGFPVCKPCYEYERSEGTQCCPQCN). A disordered region spans residues 116-154 (NGEQPAQKWRPGGPALSSFTGSVAGKDLEQEREMEGGME). The span at 141–154 (KDLEQEREMEGGME) shows a compositional bias: basic and acidic residues. A helical transmembrane segment spans residues 214–234 (IVIVLRLVVLCFFLKFRITTP). Residues 235 to 237 (AMD) lie on the Extracellular side of the membrane. A helical membrane pass occupies residues 238 to 258 (AVPLWLASVICELWFALSWIL). Residues 259 to 845 (DQLPKWSPVT…TNTIVYPFTS (587 aa)) lie on the Cytoplasmic side of the membrane. Residues Ser297, Lys303, Glu304, and Asp333 each coordinate UDP-alpha-D-glucose. The active site involves Asp333. Residues 387–414 (VKERRAMKREYEEFKVRINALVAKAQKK) adopt a coiled-coil conformation. Lys474 serves as a coordination point for UDP-alpha-D-glucose. Mn(2+)-binding residues include Lys475 and Asp499. Asp762 is an active-site residue. The chain crosses the membrane as a helical span at residues 846–866 (IPLLAYCTIPAVCLLTGKFII). Residues 867-871 (PTLNN) are Extracellular-facing. The chain crosses the membrane as a helical span at residues 872–892 (LASIWFIALFLSIIATGVLEL). Over 893–907 (RWSGVSIEDWWRNEQ) the chain is Cytoplasmic. Residues 908–928 (FWVIGGVSAHLFAVFQGLLKV) form a helical membrane-spanning segment. The Extracellular segment spans residues 929 to 959 (LGGVDTNFTVTSKAAADETDAFGELYLFKWT). Residue Asn935 is glycosylated (N-linked (GlcNAc...) asparagine). The helical transmembrane segment at 960–980 (TLLVPPTTLIIINMVGIVAGV) threads the bilayer. Residues 981–991 (SDAVNNGYGSW) are Cytoplasmic-facing. Residues 992–1012 (GPLFGKLFFSFWVILHLYPFL) traverse the membrane as a helical segment. Topologically, residues 1013–1021 (KGLMGRQNR) are extracellular. A helical transmembrane segment spans residues 1022-1042 (TPTIVVLWSILLASIFSLVWV). Over 1043 to 1063 (RIDPFIPKPKGPVLKPCGVSC) the chain is Cytoplasmic.

It belongs to the glycosyltransferase 2 family. Plant cellulose synthase subfamily. Mn(2+) is required as a cofactor. The cofactor is Zn(2+).

The protein localises to the cell membrane. It catalyses the reaction [(1-&gt;4)-beta-D-glucosyl](n) + UDP-alpha-D-glucose = [(1-&gt;4)-beta-D-glucosyl](n+1) + UDP + H(+). It functions in the pathway glycan metabolism; plant cellulose biosynthesis. Functionally, catalytic subunit of cellulose synthase terminal complexes ('rosettes'), required for beta-1,4-glucan microfibril crystallization, a major mechanism of the cell wall formation. Involved in the secondary cell wall formation. This is Cellulose synthase A catalytic subunit 7 [UDP-forming] (CESA7) from Oryza sativa subsp. japonica (Rice).